The primary structure comprises 478 residues: Ankyrin repeat and BTB/POZ domain-containing protein 1 (478 aa).

ANK repeat units lie at residues 1–31 (MDTS…EVNV) and 35–64 (WDST…RCEA). 2 BTB domains span residues 115 to 182 (SDVV…DIGV) and 272 to 346 (PDIC…ELPP). A coiled-coil region spans residues 450–478 (TVQTYSAIEEAQQQLRALENLLVSIGLDC).

The protein localises to the cytoplasm. Functionally, may act as a mediator of the PTEN growth-suppressive signaling pathway. May play a role in developmental processes. In Rattus norvegicus (Rat), this protein is Ankyrin repeat and BTB/POZ domain-containing protein 1.